The sequence spans 719 residues: Phosphoribosylformylglycinamidine synthase subunit PurL (719 aa).

His47 is an active-site residue. ATP contacts are provided by Tyr50 and Lys89. Glu91 provides a ligand contact to Mg(2+). Substrate-binding positions include 92–95 and Arg114; that span reads SHNH. His93 serves as the catalytic Proton acceptor. Asp115 contacts Mg(2+). Substrate is bound at residue Gln238. Residue Asp266 coordinates Mg(2+). 310 to 312 lines the substrate pocket; sequence ESQ. ATP-binding residues include Asp488 and Gly525. Asn526 lines the Mg(2+) pocket. Ser528 contacts substrate.

This sequence belongs to the FGAMS family. Monomer. Part of the FGAM synthase complex composed of 1 PurL, 1 PurQ and 2 PurS subunits.

Its subcellular location is the cytoplasm. It carries out the reaction N(2)-formyl-N(1)-(5-phospho-beta-D-ribosyl)glycinamide + L-glutamine + ATP + H2O = 2-formamido-N(1)-(5-O-phospho-beta-D-ribosyl)acetamidine + L-glutamate + ADP + phosphate + H(+). Its pathway is purine metabolism; IMP biosynthesis via de novo pathway; 5-amino-1-(5-phospho-D-ribosyl)imidazole from N(2)-formyl-N(1)-(5-phospho-D-ribosyl)glycinamide: step 1/2. Its function is as follows. Part of the phosphoribosylformylglycinamidine synthase complex involved in the purines biosynthetic pathway. Catalyzes the ATP-dependent conversion of formylglycinamide ribonucleotide (FGAR) and glutamine to yield formylglycinamidine ribonucleotide (FGAM) and glutamate. The FGAM synthase complex is composed of three subunits. PurQ produces an ammonia molecule by converting glutamine to glutamate. PurL transfers the ammonia molecule to FGAR to form FGAM in an ATP-dependent manner. PurS interacts with PurQ and PurL and is thought to assist in the transfer of the ammonia molecule from PurQ to PurL. In Ruegeria pomeroyi (strain ATCC 700808 / DSM 15171 / DSS-3) (Silicibacter pomeroyi), this protein is Phosphoribosylformylglycinamidine synthase subunit PurL.